The primary structure comprises 405 residues: MEKLMFHPHGKEFHHNPFSVLGRFREEEPIHRFELKRFGATYPAWLITRYDDCMAFLKDNRITRDVKNVMNQEQIKMLNVSEDIDFVSDHMLAKDTPDHTRLRSLVHQAFTPRTIENLRGSIEQIAEQLLDEMEKENKADIMKSFASPLPFIVISELMGIPKEDRSQFQIWTNAMVDTSEGNRELTNQALREFKDYIAKLIHDRRIKPKDDLISKLVHAEENGSKLSEKELYSMLFLLVVAGLETTVNLLGSGTLALLQHKKECEKLKQQPEMIATAVEELLRYTSPVVMMANRWAIEDFTYKGHSIKRGDMIFIGIGSANRDPNFFENPEILNINRSPNRHISFGFGIHFCLGAPLARLEGHIAFKALLKRFPDIELAVAPDDIQWRKNVFLRGLESLPVSLSK.

A helical transmembrane segment spans residues 231-251 (LYSMLFLLVVAGLETTVNLLG). C352 is a binding site for heme.

The protein belongs to the cytochrome P450 family.

The protein resides in the cell membrane. Its pathway is antibiotic biosynthesis; bacillaene biosynthesis. Functionally, involved in the metabolism of the antibiotic polyketide bacillaene which is involved in secondary metabolism. The substrate is dihydrobacillaene. The protein is Polyketide biosynthesis cytochrome P450 PksS (pksS) of Bacillus subtilis (strain 168).